The following is a 75-amino-acid chain: Protein myomixer (75 aa).

The Cytoplasmic segment spans residues 1 to 5 (MPAVF). The chain crosses the membrane as a helical span at residues 6 to 28 (LLLRSLVVRLFGSRLAASGVQLL). The Extracellular segment spans residues 29 to 75 (RRILTTATGHLGTVLRNIWERISSQQSKEAILGCVLCLLNMHKKVDN). The AxLyCxL signature appears at 58–67 (AILGCVLCLL).

The protein belongs to the MYMX family. In terms of tissue distribution, specifically expressed in the developing myotome.

It is found in the cell membrane. Myoblast-specific protein that mediates myoblast fusion, an essential step for the formation of multi-nucleated muscle fibers. Involved in membrane fusion downstream of the lipid mixing step mediated by mymk. Acts by generating membrane stresses via its extracellular C-terminus, leading to drive fusion pore formation. The chain is Protein myomixer from Danio rerio (Zebrafish).